The sequence spans 407 residues: NADH-quinone oxidoreductase subunit D (407 aa).

This sequence belongs to the complex I 49 kDa subunit family. As to quaternary structure, NDH-1 is composed of 14 different subunits. Subunits NuoB, C, D, E, F, and G constitute the peripheral sector of the complex.

It localises to the cell inner membrane. The catalysed reaction is a quinone + NADH + 5 H(+)(in) = a quinol + NAD(+) + 4 H(+)(out). In terms of biological role, NDH-1 shuttles electrons from NADH, via FMN and iron-sulfur (Fe-S) centers, to quinones in the respiratory chain. The immediate electron acceptor for the enzyme in this species is believed to be ubiquinone. Couples the redox reaction to proton translocation (for every two electrons transferred, four hydrogen ions are translocated across the cytoplasmic membrane), and thus conserves the redox energy in a proton gradient. The sequence is that of NADH-quinone oxidoreductase subunit D from Roseobacter denitrificans (strain ATCC 33942 / OCh 114) (Erythrobacter sp. (strain OCh 114)).